Here is a 466-residue protein sequence, read N- to C-terminus: Glutamate--tRNA ligase (466 aa).

Positions 11 to 21 (PSPTGFIHLGN) match the 'HIGH' region motif. A 'KMSKS' region motif is present at residues 243–247 (KMSKR). K246 contributes to the ATP binding site.

The protein belongs to the class-I aminoacyl-tRNA synthetase family. Glutamate--tRNA ligase type 1 subfamily. In terms of assembly, monomer.

The protein resides in the cytoplasm. The enzyme catalyses tRNA(Glu) + L-glutamate + ATP = L-glutamyl-tRNA(Glu) + AMP + diphosphate. In terms of biological role, catalyzes the attachment of glutamate to tRNA(Glu) in a two-step reaction: glutamate is first activated by ATP to form Glu-AMP and then transferred to the acceptor end of tRNA(Glu). This is Glutamate--tRNA ligase from Cupriavidus taiwanensis (strain DSM 17343 / BCRC 17206 / CCUG 44338 / CIP 107171 / LMG 19424 / R1) (Ralstonia taiwanensis (strain LMG 19424)).